The following is a 635-amino-acid chain: Sodium- and chloride-dependent creatine transporter 1 (635 aa).

A compositionally biased stretch (polar residues) spans 1–11 (MANKSTENGIY). The tract at residues 1 to 27 (MANKSTENGIYSVSGEEKKGPLIAPGP) is disordered. Residues 1–60 (MANKSTENGIYSVSGEEKKGPLIAPGPDGAPAKGDGPAALGAPGSLLAVPPRETWTRQMD) are Cytoplasmic-facing. The chain crosses the membrane as a helical span at residues 61 to 81 (FIMSCVGFAVGLGNVWRFPYL). The Extracellular portion of the chain corresponds to 82–87 (CYKNGG). The chain crosses the membrane as a helical span at residues 88-108 (GVFLIPYILIALIGGIPIFFL). Over 109–138 (EISLGQFMKAGSINVWNICPLFKGLGYASM) the chain is Cytoplasmic. A helical transmembrane segment spans residues 139–159 (VIVFYCNTYYIMVLAWGFYYL). The Extracellular portion of the chain corresponds to 160 to 230 (VKSFTTTLPW…LSEGLEVPGA (71 aa)). Residues asparagine 192 and asparagine 197 are each glycosylated (N-linked (GlcNAc...) asparagine). Residues 231 to 251 (LNWEVTLCLLTCWVLVYFCVW) traverse the membrane as a helical segment. Topologically, residues 252–269 (KGVKSTGKIVYFTATFPY) are cytoplasmic. Residues 270 to 290 (VVLVVLLVRGVLLPGALDGII) traverse the membrane as a helical segment. Residues 291–304 (YYLKPDWSKLASPQ) lie on the Extracellular side of the membrane. The helical transmembrane segment at 305–325 (VWIDAGTQIFFSYAIGLGALT) threads the bilayer. Over 326–341 (ALGSYNRFNNNCYKDA) the chain is Cytoplasmic. Residues 342–362 (IILALINSGTSFFAGFVVFSI) traverse the membrane as a helical segment. Residues 363-394 (LGFMATEQGVHISKVAESGPGLAFIAYPRAVT) are Extracellular-facing. The helical transmembrane segment at 395–415 (LMPVAPLWAALFFFMLLLLGL) threads the bilayer. The Cytoplasmic segment spans residues 416–444 (DSQFVGVEGFITGLLDLLPASYYFRFQRE). The helical transmembrane segment at 445–465 (ISVALCCTICFVIDLSMVTDG) threads the bilayer. The Extracellular segment spans residues 466-479 (GMYVFQLFDYYSAS). The chain crosses the membrane as a helical span at residues 480–500 (GTTLLWQAFWECVVVAWVYGA). Residues 501–520 (DRFMDDVACMIGYRPCPWMK) lie on the Cytoplasmic side of the membrane. The helical transmembrane segment at 521–541 (WCWSFFTPLVCMGIFIFNVVY) threads the bilayer. The Extracellular segment spans residues 542–560 (HEPLVYNNTYVYPWWGEAV). An N-linked (GlcNAc...) asparagine glycan is attached at asparagine 548. Residues 561-581 (GWAFALSSMLCVPLHLLGCLL) form a helical membrane-spanning segment. Topologically, residues 582–635 (RAKGTMAERWQHLTQPIWGLHHLEYRAQDSDVRGLTTLTPVSESSKVVVVESVM) are cytoplasmic. Threonine 617 and threonine 620 each carry phosphothreonine. At serine 623 the chain carries Phosphoserine.

Belongs to the sodium:neurotransmitter symporter (SNF) (TC 2.A.22) family. SLC6A8 subfamily. In terms of processing, glycosylated.

Its subcellular location is the cell membrane. The protein localises to the apical cell membrane. The catalysed reaction is creatine(out) + chloride(out) + 2 Na(+)(out) = creatine(in) + chloride(in) + 2 Na(+)(in). Creatine:sodium symporter which mediates the uptake of creatine. Plays an important role in supplying creatine to the brain via the blood-brain barrier. The chain is Sodium- and chloride-dependent creatine transporter 1 (SLC6A8) from Bos taurus (Bovine).